The primary structure comprises 117 residues: MAWTSLILSLLALCSGASSQAVVTQESALTTSPGGTVILTCRSSTGAVTTSNYANWVQEKPDHLFTGLIGGTSNRAPGVPVRFSGSLIGDKAALTITGAQTEDDAMYFCALWYSTHF.

Residues 1–19 form the signal peptide; the sequence is MAWTSLILSLLALCSGASS. Q20 carries the pyrrolidone carboxylic acid modification. Residues 20 to 117 enclose the Ig-like domain; that stretch reads QAVVTQESAL…FCALWYSTHF (98 aa).

The polypeptide is Immunoglobulin lambda variable 2 (Mus musculus (Mouse)).